Consider the following 434-residue polypeptide: Ataxin-10 homolog (434 aa).

The protein belongs to the ataxin-10 family.

It localises to the cytoplasm. The protein localises to the nucleus. May play a role in the regulation of cytokinesis. The polypeptide is Ataxin-10 homolog (mug160) (Schizosaccharomyces pombe (strain 972 / ATCC 24843) (Fission yeast)).